The sequence spans 112 residues: UPF0145 protein LAF_1635 (112 aa).

The protein belongs to the UPF0145 family.

The protein is UPF0145 protein LAF_1635 of Limosilactobacillus fermentum (strain NBRC 3956 / LMG 18251) (Lactobacillus fermentum).